Here is a 457-residue protein sequence, read N- to C-terminus: UDP-N-acetylmuramate--L-alanine ligase (457 aa).

Residue 112–118 participates in ATP binding; the sequence is GTHGKTT.

This sequence belongs to the MurCDEF family.

It is found in the cytoplasm. The enzyme catalyses UDP-N-acetyl-alpha-D-muramate + L-alanine + ATP = UDP-N-acetyl-alpha-D-muramoyl-L-alanine + ADP + phosphate + H(+). It participates in cell wall biogenesis; peptidoglycan biosynthesis. Cell wall formation. This chain is UDP-N-acetylmuramate--L-alanine ligase, found in Solidesulfovibrio magneticus (strain ATCC 700980 / DSM 13731 / RS-1) (Desulfovibrio magneticus).